The sequence spans 502 residues: Mannitol 2-dehydrogenase (502 aa).

Position 37-48 (37-48 (IVHIGVGGFHRA)) interacts with NAD(+).

Belongs to the mannitol dehydrogenase family. As to quaternary structure, monomer.

It carries out the reaction D-mannitol + NAD(+) = D-fructose + NADH + H(+). In terms of biological role, catalyzes the NAD(H)-dependent interconversion of D-fructose and D-mannitol in the mannitol metabolic pathway. The chain is Mannitol 2-dehydrogenase from Aspergillus clavatus (strain ATCC 1007 / CBS 513.65 / DSM 816 / NCTC 3887 / NRRL 1 / QM 1276 / 107).